The chain runs to 809 residues: Leucine--tRNA ligase (809 aa).

The 'HIGH' region motif lies at 40–50; sequence PYPSGRIHMGH. The 'KMSKS' region signature appears at 579–583; the sequence is KMSKS. Lys-582 provides a ligand contact to ATP.

Belongs to the class-I aminoacyl-tRNA synthetase family.

Its subcellular location is the cytoplasm. It carries out the reaction tRNA(Leu) + L-leucine + ATP = L-leucyl-tRNA(Leu) + AMP + diphosphate. This Campylobacter lari (strain RM2100 / D67 / ATCC BAA-1060) protein is Leucine--tRNA ligase.